Consider the following 725-residue polypeptide: Consortin (725 aa).

Disordered regions lie at residues 1 to 72, 103 to 124, 296 to 353, 375 to 397, and 485 to 510; these read MDDS…LNNN, GKDKKIPGKRSPRSKKGTAKKI, LLVS…SLSV, TQSSETAGSPSGPDSSEDACEDD, and QQPDLTDSDGKSPQAQADSDGSENVL. Residues 1 to 664 lie on the Cytoplasmic side of the membrane; it reads MDDSDTPTYY…LDQDEVGGGS (664 aa). A compositionally biased stretch (polar residues) spans 63 to 72; that stretch reads VSEQDSLNNN. A compositionally biased stretch (basic residues) spans 109–121; that stretch reads PGKRSPRSKKGTA. Over residues 300-314 the composition is skewed to basic and acidic residues; the sequence is EDPKEGGATTKESES. Polar residues-rich tracts occupy residues 343-353 and 375-388; these read DVQTDSPSLSV and TQSSETAGSPSGPD. A helical transmembrane segment spans residues 665–685; it reads CILLVLLCIATVFLSVGGTAL. Residues 686 to 725 are Extracellular-facing; the sequence is YCTFGDMESPVCTDFADNMDFYYTKLLQGVAELKHWIYLS.

The protein belongs to the CNST family. In terms of assembly, interacts with connexins GJA1/CX43, GJB1/CX32, GJB2/CX26, GJB3/CX31, GJB6/CX30 and GJC1/CX45. Also interacts with GGA1 and GGA2. Does not interact with PANX1.

It is found in the cell membrane. Its subcellular location is the golgi apparatus. The protein localises to the trans-Golgi network membrane. It localises to the cytoplasmic vesicle. The protein resides in the secretory vesicle. Functionally, required for targeting of connexins to the plasma membrane. This chain is Consortin (CNST), found in Homo sapiens (Human).